The following is an 85-amino-acid chain: Neurotoxin BmKAEP2 (85 aa).

Residues 1–21 (MKLFLLLVISASMLIDGLVNA) form the signal peptide. The region spanning 22 to 82 (DGYIRGSNGC…TWKSESNTCG (61 aa)) is the LCN-type CS-alpha/beta domain. 4 disulfide bridges follow: cysteine 31–cysteine 81, cysteine 35–cysteine 56, cysteine 42–cysteine 63, and cysteine 46–cysteine 65.

This sequence belongs to the long (4 C-C) scorpion toxin superfamily. Sodium channel inhibitor family. Beta subfamily. Expressed by the venom gland.

It localises to the secreted. In terms of biological role, depressant insect beta-toxins cause a transient contraction paralysis followed by a slow flaccid paralysis. They bind voltage-independently at site-4 of sodium channels (Nav) and shift the voltage of activation toward more negative potentials thereby affecting sodium channel activation and promoting spontaneous and repetitive firing. This toxin is active only on insects. Has potential anti-epilepsy effect. The protein is Neurotoxin BmKAEP2 of Olivierus martensii (Manchurian scorpion).